The primary structure comprises 164 residues: SsrA-binding protein (164 aa).

Belongs to the SmpB family.

It is found in the cytoplasm. In terms of biological role, required for rescue of stalled ribosomes mediated by trans-translation. Binds to transfer-messenger RNA (tmRNA), required for stable association of tmRNA with ribosomes. tmRNA and SmpB together mimic tRNA shape, replacing the anticodon stem-loop with SmpB. tmRNA is encoded by the ssrA gene; the 2 termini fold to resemble tRNA(Ala) and it encodes a 'tag peptide', a short internal open reading frame. During trans-translation Ala-aminoacylated tmRNA acts like a tRNA, entering the A-site of stalled ribosomes, displacing the stalled mRNA. The ribosome then switches to translate the ORF on the tmRNA; the nascent peptide is terminated with the 'tag peptide' encoded by the tmRNA and targeted for degradation. The ribosome is freed to recommence translation, which seems to be the essential function of trans-translation. In Shewanella woodyi (strain ATCC 51908 / MS32), this protein is SsrA-binding protein.